A 976-amino-acid chain; its full sequence is LRR receptor-like serine/threonine-protein kinase ERECTA (976 aa).

A signal peptide spans 1-24 (MALFRDIVLLGFLFCLSLVATVTS). The Extracellular portion of the chain corresponds to 25 to 580 (EEGATLLEIK…RRTVRVSISR (556 aa)). Asn-65 and Asn-74 each carry an N-linked (GlcNAc...) asparagine glycan. 20 LRR repeats span residues 69-92 (NVVA…GDLK), 93-115 (SLLS…IGDC), 117-140 (SLQN…SKLK), 141-163 (QLEQ…LSQI), 165-187 (NLKI…IYWN), 189-212 (VLQY…CQLT), 213-235 (GLWY…IGNC), 237-259 (AFQV…IGFL), 260-282 (QVAT…IGLM), 284-306 (ALAV…LGNL), 308-330 (FTEK…LGNM), 332-355 (KLHY…GKLT), 356-379 (DLFD…SSCT), 380-401 (NLNS…AFQK), 404-425 (SMTY…ELSR), 428-449 (NLDT…SLGD), 452-473 (HLLK…DFGN), 476-498 (SIME…LNQL), 500-522 (NIIL…ANCL), and 523-545 (SLTV…NNFS). 2 N-linked (GlcNAc...) asparagine glycosylation sites follow: Asn-221 and Asn-234. 2 N-linked (GlcNAc...) asparagine glycosylation sites follow: Asn-305 and Asn-329. Residue Asn-409 is glycosylated (N-linked (GlcNAc...) asparagine). An N-linked (GlcNAc...) asparagine glycan is attached at Asn-457. 3 N-linked (GlcNAc...) asparagine glycosylation sites follow: Asn-510, Asn-528, and Asn-543. Residues 581 to 601 (AAILGIAIGGLVILLMVLIAA) traverse the membrane as a helical segment. The Cytoplasmic portion of the chain corresponds to 602–976 (CRPHNPPPFL…FGQVISQNSE (375 aa)). At Thr-645 the chain carries Phosphothreonine. In terms of domain architecture, Protein kinase spans 648–918 (LSEKYIIGHG…QVTRVLGSFM (271 aa)). Residues 654–662 (IGHGASSTV) and Lys-676 contribute to the ATP site. Tyr-721 and Tyr-760 each carry phosphotyrosine. Residue Asp-773 is the Proton acceptor of the active site. At Tyr-815 the chain carries Phosphotyrosine. The residue at position 823 (Thr-823) is a Phosphothreonine.

Belongs to the protein kinase superfamily. Ser/Thr protein kinase family. As to quaternary structure, homodimer and heterodimer with ERL1 and TMM. Interacts with EPF1, EPF2, EPFL4, EPFL5 and EPFL6. Interacts with SERK1, SERK2, SERK3/BAK1 and SERK4 in a EPF2-induced manner. Interacts with EPFL9/STOMAGEN. Mostly expressed in shoot apical meristems (SAM), organ primordia, flowers, siliques and young rosette leaves, and, to a lower extent, in stems and cauline leaves. Expressed in growing inflorescence stems and pedicels. Detected in epidermis, phloem and xylem.

It localises to the cell membrane. It carries out the reaction L-seryl-[protein] + ATP = O-phospho-L-seryl-[protein] + ADP + H(+). The enzyme catalyses L-threonyl-[protein] + ATP = O-phospho-L-threonyl-[protein] + ADP + H(+). Receptor kinase that, together with ERL1 and ERL2, regulates aerial architecture, including inflorescence (e.g. shoot apical meristem-originating organ shape, elongation of the internode and pedicels, and adaxial-abaxial polarity), and stomatal patterning (e.g. density and clustering), probably by tuning cell division and expansion. Redundantly involved with ERL1 in procambial development regulation. Forms a functional ligand-receptor pair with EPF2 (AC Q8LC53). Modulates plant transpiration efficiency by controlling stomatal density, leaf photosynthetic capacity, epidermal cell expansion, mesophyll cell proliferation and cell-cell contact. A phloem-specific expression of ER is sufficient for proper inflorescence architecture. Probable major trait regulating canalization (maintenance of phenotype despite varying environment) in many aspect of the plant physiology (e.g. plant morphology, light-dependent leaves number, branch number, flowering time, phytate and mineral concentrations) by transducing microenvironmental variation into phenotypic differentiation (ecological amplifier). May maintain development integrity in heat stress conditions. Regulates cell wall composition and structure. Confers resistance to the pathogenic bacteria Ralstonia solanacearum and to the necrotrophic fungi Plectosphaerella cucumerina and Pythium irregulare, and required for callose deposition upon infection. Resistance to P.cucumerina seems cell wall-mediated. Forms a constitutive complex with TMM involved in the recognition of the stomatal regulatory peptides EPF1, EPF2 and EPFL9/STOMAGEN. This Arabidopsis thaliana (Mouse-ear cress) protein is LRR receptor-like serine/threonine-protein kinase ERECTA.